Reading from the N-terminus, the 346-residue chain is NADH-ubiquinone oxidoreductase chain 2 (346 aa).

The next 11 membrane-spanning stretches (helical) occupy residues 1–21, 25–45, 60–80, 95–115, 124–144, 149–169, 178–195, 200–219, 242–262, 274–294, and 326–346; these read MNPH…TITI, HWVL…PLIS, FLTQ…NAWA, CLLL…HFWF, LMTA…LLLM, LNPA…GWMG, ILAF…IILV, LALL…FMAL, ATLM…GFMP, EMTP…FFYL, and AILA…HAIV.

Belongs to the complex I subunit 2 family.

It localises to the mitochondrion inner membrane. The enzyme catalyses a ubiquinone + NADH + 5 H(+)(in) = a ubiquinol + NAD(+) + 4 H(+)(out). In terms of biological role, core subunit of the mitochondrial membrane respiratory chain NADH dehydrogenase (Complex I) that is believed to belong to the minimal assembly required for catalysis. Complex I functions in the transfer of electrons from NADH to the respiratory chain. The immediate electron acceptor for the enzyme is believed to be ubiquinone. This Mareca penelope (Eurasian wigeon) protein is NADH-ubiquinone oxidoreductase chain 2 (MT-ND2).